A 488-amino-acid polypeptide reads, in one-letter code: Protein nucleotidyltransferase YdiU (488 aa).

ATP is bound by residues glycine 91, glycine 93, arginine 94, lysine 114, aspartate 126, glycine 127, arginine 177, and arginine 184. The Proton acceptor role is filled by aspartate 253. Mg(2+) contacts are provided by asparagine 254 and aspartate 263. Position 263 (aspartate 263) interacts with ATP.

The protein belongs to the SELO family. The cofactor is Mg(2+). Requires Mn(2+) as cofactor.

The enzyme catalyses L-seryl-[protein] + ATP = 3-O-(5'-adenylyl)-L-seryl-[protein] + diphosphate. It carries out the reaction L-threonyl-[protein] + ATP = 3-O-(5'-adenylyl)-L-threonyl-[protein] + diphosphate. It catalyses the reaction L-tyrosyl-[protein] + ATP = O-(5'-adenylyl)-L-tyrosyl-[protein] + diphosphate. The catalysed reaction is L-histidyl-[protein] + UTP = N(tele)-(5'-uridylyl)-L-histidyl-[protein] + diphosphate. The enzyme catalyses L-seryl-[protein] + UTP = O-(5'-uridylyl)-L-seryl-[protein] + diphosphate. It carries out the reaction L-tyrosyl-[protein] + UTP = O-(5'-uridylyl)-L-tyrosyl-[protein] + diphosphate. Its function is as follows. Nucleotidyltransferase involved in the post-translational modification of proteins. It can catalyze the addition of adenosine monophosphate (AMP) or uridine monophosphate (UMP) to a protein, resulting in modifications known as AMPylation and UMPylation. In Bacillus cereus (strain AH187), this protein is Protein nucleotidyltransferase YdiU.